We begin with the raw amino-acid sequence, 252 residues long: Methionine aminopeptidase (252 aa).

His76 serves as a coordination point for substrate. Positions 93, 104, and 168 each coordinate a divalent metal cation. His175 lines the substrate pocket. A divalent metal cation contacts are provided by Glu202 and Glu233.

This sequence belongs to the peptidase M24A family. Methionine aminopeptidase type 1 subfamily. As to quaternary structure, monomer. Co(2+) serves as cofactor. Zn(2+) is required as a cofactor. Requires Mn(2+) as cofactor. The cofactor is Fe(2+).

It carries out the reaction Release of N-terminal amino acids, preferentially methionine, from peptides and arylamides.. Removes the N-terminal methionine from nascent proteins. The N-terminal methionine is often cleaved when the second residue in the primary sequence is small and uncharged (Met-Ala-, Cys, Gly, Pro, Ser, Thr, or Val). Requires deformylation of the N(alpha)-formylated initiator methionine before it can be hydrolyzed. This is Methionine aminopeptidase from Staphylococcus aureus (strain MRSA252).